The primary structure comprises 225 residues: MEITAVQSSYYGDMAFKTPPPDLESLLLKERIVYLGMPLFSSDEVKQQVGIDVTQLIIAQLLYLQFDDPDKPIYFYINSTGTSWYTGDAVGFETEAFAICDTLNYIKPPVHTICIGQAMGTAAMILSSGTKGYRASLPHATIVLNQNRTGAQGQATDIQIRAKEVISNKQTMLEILSLNTGQTQEKLAKDMDRTFYLTPAQAKEYGLIDRVLESPAELPKPMAVI.

The protein belongs to the peptidase S14 family.

In terms of biological role, has lost the two conserved residues (Ser and His) proposed to be part of the active site. Therefore it could be inactive. This Synechocystis sp. (strain ATCC 27184 / PCC 6803 / Kazusa) protein is Putative ATP-dependent Clp protease proteolytic subunit-like (clpR).